We begin with the raw amino-acid sequence, 456 residues long: Alcohol acyl transferase 1 allele GSc (456 aa).

Active-site proton acceptor residues include histidine 165 and asparagine 386.

Belongs to the plant acyltransferase family. In terms of tissue distribution, expressed at very low levels in the skin of ripe fruit.

In terms of biological role, involved in the biosynthesis of volatile esters which confer ripe apple fruit flavor. Alcohol acyl transferase that can use a wide range of alcohols as substrate to produce esters. The protein is Alcohol acyl transferase 1 allele GSc of Malus domestica (Apple).